The chain runs to 199 residues: 3-isopropylmalate dehydratase small subunit (199 aa).

It belongs to the LeuD family. LeuD type 1 subfamily. As to quaternary structure, heterodimer of LeuC and LeuD.

The catalysed reaction is (2R,3S)-3-isopropylmalate = (2S)-2-isopropylmalate. Its pathway is amino-acid biosynthesis; L-leucine biosynthesis; L-leucine from 3-methyl-2-oxobutanoate: step 2/4. In terms of biological role, catalyzes the isomerization between 2-isopropylmalate and 3-isopropylmalate, via the formation of 2-isopropylmaleate. The polypeptide is 3-isopropylmalate dehydratase small subunit (Bacillus pumilus (strain SAFR-032)).